A 430-amino-acid chain; its full sequence is Centrosomal protein CEP57L1 (430 aa).

The residue at position 45 (Ser45) is a Phosphoserine. The stretch at 46–213 forms a coiled coil; the sequence is PNNQALVSAL…HQRRLFQDRA (168 aa). Disordered stretches follow at residues 248 to 290 and 362 to 430; these read CLKR…GEPF and RKLQ…KWEQ. Basic and acidic residues-rich tracts occupy residues 249 to 272, 362 to 372, and 421 to 430; these read LKRE…ERPP, RKLQEKVENSR, and LRRDDVKWEQ. Positions 290-377 form a coiled coil; it reads FSICDNLSEL…VENSRINESS (88 aa).

This sequence belongs to the translokin family.

The protein localises to the cytoplasm. The protein resides in the cytoskeleton. It localises to the microtubule organizing center. It is found in the centrosome. Centrosomal protein which may be required for microtubule attachment to centrosomes. This chain is Centrosomal protein CEP57L1 (Cep57l1), found in Rattus norvegicus (Rat).